A 292-amino-acid chain; its full sequence is Ribosomal protein L11 methyltransferase (292 aa).

Positions 144, 165, 187, and 229 each coordinate S-adenosyl-L-methionine.

This sequence belongs to the methyltransferase superfamily. PrmA family.

The protein localises to the cytoplasm. It catalyses the reaction L-lysyl-[protein] + 3 S-adenosyl-L-methionine = N(6),N(6),N(6)-trimethyl-L-lysyl-[protein] + 3 S-adenosyl-L-homocysteine + 3 H(+). Its function is as follows. Methylates ribosomal protein L11. The polypeptide is Ribosomal protein L11 methyltransferase (Pseudomonas putida (strain ATCC 700007 / DSM 6899 / JCM 31910 / BCRC 17059 / LMG 24140 / F1)).